The chain runs to 336 residues: N-acetyl-gamma-glutamyl-phosphate reductase (336 aa).

Cys-156 is a catalytic residue.

Belongs to the NAGSA dehydrogenase family. Type 1 subfamily.

It localises to the cytoplasm. It catalyses the reaction N-acetyl-L-glutamate 5-semialdehyde + phosphate + NADP(+) = N-acetyl-L-glutamyl 5-phosphate + NADPH + H(+). It participates in amino-acid biosynthesis; L-arginine biosynthesis; N(2)-acetyl-L-ornithine from L-glutamate: step 3/4. Functionally, catalyzes the NADPH-dependent reduction of N-acetyl-5-glutamyl phosphate to yield N-acetyl-L-glutamate 5-semialdehyde. This is N-acetyl-gamma-glutamyl-phosphate reductase from Moritella profunda.